The following is a 78-amino-acid chain: Small ribosomal subunit protein bS18B (78 aa).

Belongs to the bacterial ribosomal protein bS18 family. In terms of assembly, part of the 30S ribosomal subunit. Forms a tight heterodimer with protein bS6.

Functionally, binds as a heterodimer with protein bS6 to the central domain of the 16S rRNA, where it helps stabilize the platform of the 30S subunit. This Streptomyces griseus subsp. griseus (strain JCM 4626 / CBS 651.72 / NBRC 13350 / KCC S-0626 / ISP 5235) protein is Small ribosomal subunit protein bS18B.